Consider the following 419-residue polypeptide: Vascular endothelial growth factor C (419 aa).

Residues 1-31 (MHLLGFFSVACSLLAAALLPGPREAPAAAAA) form the signal peptide. Residues 32-111 (FESGLDLSDA…RTEETIKFAA (80 aa)) constitute a propeptide, or 102. 3 cysteine pairs are disulfide-bonded: Cys131–Cys173, Cys162–Cys209, and Cys166–Cys211. Residues Asn175, Asn205, and Asn240 are each glycosylated (N-linked (GlcNAc...) asparagine). A propeptide spanning residues 228–419 (SLPATLPQCQ…PSYWKRPQMS (192 aa)) is cleaved from the precursor. 4 repeat units span residues 280 to 295 (CGPN…QCVC), 304 to 319 (CGPH…QCVC), 328 to 343 (CGAN…QCVC), and 347 to 362 (CPRN…ACEC). A 4 X 16 AA repeats of C-X(10)-C-X-C-X(1,3)-C region spans residues 280–362 (CGPNKELDEE…LNPGKCACEC (83 aa)).

Belongs to the PDGF/VEGF growth factor family. Homodimer; non-covalent and antiparallel. Interacts with FLT4/VEGFR3; the interaction is required for FLT4/VEGFR3 homodimarization and activation. Undergoes a complex proteolytic maturation which generates a variety of processed secreted forms with increased activity toward VEGFR-3, but only the fully processed form could activate VEGFR-2. VEGF-C first form an antiparallel homodimer linked by disulfide bonds. Before secretion, a cleavage occurs between Arg-227 and Ser-228 producing a heterotetramer. The next extracellular step of the processing removes the N-terminal propeptide. Finally the mature VEGF-C is composed mostly of two VEGF homology domains (VHDs) bound by non-covalent interactions. Expressed in the spleen. Expressed in the lymph node, thymus, appendix and bone marrow. Expressed in the heart, placenta, skeletal muscle, ovary and small intestine. Expressed in the prostate, testis and colon.

The protein localises to the secreted. Growth factor active in angiogenesis, and endothelial cell growth, stimulating their proliferation and migration and also has effects on the permeability of blood vessels. May function in angiogenesis of the venous and lymphatic vascular systems during embryogenesis, and also in the maintenance of differentiated lymphatic endothelium in adults. Binds and activates KDR/VEGFR2 and FLT4/VEGFR3 receptors. The protein is Vascular endothelial growth factor C (VEGFC) of Homo sapiens (Human).